A 148-amino-acid polypeptide reads, in one-letter code: D-aminoacyl-tRNA deacylase (148 aa).

Positions 137–138 (GP) match the Gly-cisPro motif, important for rejection of L-amino acids motif.

It belongs to the DTD family. As to quaternary structure, homodimer.

It is found in the cytoplasm. The catalysed reaction is glycyl-tRNA(Ala) + H2O = tRNA(Ala) + glycine + H(+). The enzyme catalyses a D-aminoacyl-tRNA + H2O = a tRNA + a D-alpha-amino acid + H(+). An aminoacyl-tRNA editing enzyme that deacylates mischarged D-aminoacyl-tRNAs. Also deacylates mischarged glycyl-tRNA(Ala), protecting cells against glycine mischarging by AlaRS. Acts via tRNA-based rather than protein-based catalysis; rejects L-amino acids rather than detecting D-amino acids in the active site. By recycling D-aminoacyl-tRNA to D-amino acids and free tRNA molecules, this enzyme counteracts the toxicity associated with the formation of D-aminoacyl-tRNA entities in vivo and helps enforce protein L-homochirality. The protein is D-aminoacyl-tRNA deacylase of Lactiplantibacillus plantarum (strain ATCC BAA-793 / NCIMB 8826 / WCFS1) (Lactobacillus plantarum).